Reading from the N-terminus, the 351-residue chain is UDP-3-O-acylglucosamine N-acyltransferase (351 aa).

His239 acts as the Proton acceptor in catalysis.

It belongs to the transferase hexapeptide repeat family. LpxD subfamily. As to quaternary structure, homotrimer.

It carries out the reaction a UDP-3-O-[(3R)-3-hydroxyacyl]-alpha-D-glucosamine + a (3R)-hydroxyacyl-[ACP] = a UDP-2-N,3-O-bis[(3R)-3-hydroxyacyl]-alpha-D-glucosamine + holo-[ACP] + H(+). It functions in the pathway bacterial outer membrane biogenesis; LPS lipid A biosynthesis. Catalyzes the N-acylation of UDP-3-O-acylglucosamine using 3-hydroxyacyl-ACP as the acyl donor. Is involved in the biosynthesis of lipid A, a phosphorylated glycolipid that anchors the lipopolysaccharide to the outer membrane of the cell. The polypeptide is UDP-3-O-acylglucosamine N-acyltransferase (Vibrio cholerae serotype O1 (strain ATCC 39315 / El Tor Inaba N16961)).